A 536-amino-acid chain; its full sequence is MVKAVSSSKGAAKVEQKKSAARSGVKKNASKSQASLQDTSSPLKTSSKNAHAKKDVQAKGAVGEIKQVIGAVVDVQFEGALPNILNALETENLGNRLVLEVAQHLGENTVRTIAMDTTDGLTRGQKVFDTETQICVPVGEATLGRIMNVIGEPVDNVGPIATTKTRSIHQKAPEYVDQSTASEILVTGIKVVDLLAPYSKGGKVGLFGGAGVGKTVLIMELINNIAKAHGGYSVFAGVGERTREGNDLYYEMIESRVNVNPKDNNGSTKGSKCALVYGQMNEPPGARARVALSGLTIAESFRDEGQDVLFFVDNIFRFTQAGAEVSALLGRIPSAVGYQPTLATDMGALQERITSTKTGSITSVQAIYVPADDLTDPAPATSFAHLDATTVLSRSIAEKGIYPAVDPLDSFSRMLDPLVVGEEHYTVACQVQTILQRYRSLQDIIAILGMDELSEEDKLLVGRARKIERFLSQPFHVAETFTGSPGKLVPLEETIKGFKGLCAGDYDDLPEAAFYMVGSIDEALEKGKRLIAEAAS.

The disordered stretch occupies residues 1–57 (MVKAVSSSKGAAKVEQKKSAARSGVKKNASKSQASLQDTSSPLKTSSKNAHAKKDVQ). A compositionally biased stretch (polar residues) spans 30–49 (SKSQASLQDTSSPLKTSSKN). ATP is bound at residue 208-215 (GGAGVGKT).

It belongs to the ATPase alpha/beta chains family. F-type ATPases have 2 components, CF(1) - the catalytic core - and CF(0) - the membrane proton channel. CF(1) has five subunits: alpha(3), beta(3), gamma(1), delta(1), epsilon(1). CF(0) has three main subunits: a(1), b(2) and c(9-12). The alpha and beta chains form an alternating ring which encloses part of the gamma chain. CF(1) is attached to CF(0) by a central stalk formed by the gamma and epsilon chains, while a peripheral stalk is formed by the delta and b chains.

The protein localises to the cell inner membrane. The catalysed reaction is ATP + H2O + 4 H(+)(in) = ADP + phosphate + 5 H(+)(out). Its function is as follows. Produces ATP from ADP in the presence of a proton gradient across the membrane. The catalytic sites are hosted primarily by the beta subunits. The protein is ATP synthase subunit beta of Bartonella quintana (strain Toulouse) (Rochalimaea quintana).